We begin with the raw amino-acid sequence, 491 residues long: Malonate-semialdehyde dehydrogenase 1 (491 aa).

NAD(+) contacts are provided by Ala-154, Phe-156, Lys-180, Glu-183, Arg-184, Ser-233, and Thr-255. Catalysis depends on Cys-288, which acts as the Nucleophile. Glu-386 serves as a coordination point for NAD(+).

Belongs to the aldehyde dehydrogenase family. IolA subfamily. Homotetramer.

The catalysed reaction is 3-oxopropanoate + NAD(+) + CoA + H2O = hydrogencarbonate + acetyl-CoA + NADH + H(+). The enzyme catalyses 2-methyl-3-oxopropanoate + NAD(+) + CoA + H2O = propanoyl-CoA + hydrogencarbonate + NADH + H(+). It functions in the pathway polyol metabolism; myo-inositol degradation into acetyl-CoA; acetyl-CoA from myo-inositol: step 7/7. Functionally, catalyzes the oxidation of malonate semialdehyde (MSA) and methylmalonate semialdehyde (MMSA) into acetyl-CoA and propanoyl-CoA, respectively. Is involved in a myo-inositol catabolic pathway. Bicarbonate, and not CO2, is the end-product of the enzymatic reaction. The sequence is that of Malonate-semialdehyde dehydrogenase 1 from Shouchella clausii (strain KSM-K16) (Alkalihalobacillus clausii).